A 142-amino-acid chain; its full sequence is Peptide methionine sulfoxide reductase MsrB (142 aa).

Residues Leu2–Tyr125 form the MsrB domain. The Nucleophile role is filled by Cys114.

This sequence belongs to the MsrB Met sulfoxide reductase family.

The catalysed reaction is L-methionyl-[protein] + [thioredoxin]-disulfide + H2O = L-methionyl-(R)-S-oxide-[protein] + [thioredoxin]-dithiol. The chain is Peptide methionine sulfoxide reductase MsrB from Staphylococcus aureus (strain USA300).